Here is a 496-residue protein sequence, read N- to C-terminus: Angiopoietin-2 (496 aa).

A signal peptide spans M1 to A18. Residues N89, N119, N133, N151, N240, and N304 are each glycosylated (N-linked (GlcNAc...) asparagine). Residues N130–V255 are a coiled coil. The region spanning K275–D495 is the Fibrinogen C-terminal domain. C284 and C313 are joined by a disulfide. 4 residues coordinate Ca(2+): D429, D431, C433, and C435. 2 cysteine pairs are disulfide-bonded: C433/C435 and C437/C450.

Interacts with TEK/TIE2, competing for the same binding site as ANGPT1. Interacts with ITGA5. Interacts with SVEP1/polydom. Interacts with THBD; this interaction significantly inhibits the generation of activated PC and TAFIa/CPB2 by the thrombin/thrombomodulin complex.

Its subcellular location is the secreted. Its function is as follows. Binds to TEK/TIE2, competing for the ANGPT1 binding site, and modulating ANGPT1 signaling. Can induce tyrosine phosphorylation of TEK/TIE2 in the absence of ANGPT1. In the absence of angiogenic inducers, such as VEGF, ANGPT2-mediated loosening of cell-matrix contacts may induce endothelial cell apoptosis with consequent vascular regression. In concert with VEGF, it may facilitate endothelial cell migration and proliferation, thus serving as a permissive angiogenic signal. Involved in the regulation of lymphangiogenesis. The chain is Angiopoietin-2 (ANGPT2) from Sus scrofa (Pig).